Here is a 370-residue protein sequence, read N- to C-terminus: 3-isopropylmalate dehydrogenase (370 aa).

77-90 (GPKWDSVPYEVRPE) provides a ligand contact to NAD(+). 4 residues coordinate substrate: arginine 97, arginine 107, arginine 135, and aspartate 226. Positions 226, 250, and 254 each coordinate Mg(2+). 290–302 (GSAPDIAGKGIAN) contributes to the NAD(+) binding site.

The protein belongs to the isocitrate and isopropylmalate dehydrogenases family. LeuB type 1 subfamily. In terms of assembly, homodimer. The cofactor is Mg(2+). It depends on Mn(2+) as a cofactor.

The protein resides in the cytoplasm. It catalyses the reaction (2R,3S)-3-isopropylmalate + NAD(+) = 4-methyl-2-oxopentanoate + CO2 + NADH. It functions in the pathway amino-acid biosynthesis; L-leucine biosynthesis; L-leucine from 3-methyl-2-oxobutanoate: step 3/4. Functionally, catalyzes the oxidation of 3-carboxy-2-hydroxy-4-methylpentanoate (3-isopropylmalate) to 3-carboxy-4-methyl-2-oxopentanoate. The product decarboxylates to 4-methyl-2 oxopentanoate. The sequence is that of 3-isopropylmalate dehydrogenase from Rhizobium etli (strain ATCC 51251 / DSM 11541 / JCM 21823 / NBRC 15573 / CFN 42).